The sequence spans 979 residues: Zinc finger protein 280D (979 aa).

Glycyl lysine isopeptide (Lys-Gly) (interchain with G-Cter in SUMO2) cross-links involve residues Lys32, Lys34, Lys74, and Lys87. The span at 89–101 (TSQHYTNPTSNPV) shows a compositional bias: polar residues. A disordered region spans residues 89 to 119 (TSQHYTNPTSNPVPASPINFHPESRSSDSSV). Ser104 bears the Phosphoserine mark. Glycyl lysine isopeptide (Lys-Gly) (interchain with G-Cter in SUMO2) cross-links involve residues Lys126 and Lys140. A disordered region spans residues 157 to 236 (YQGGPTLSMA…TSSNQSKNGT (80 aa)). Residues 169–187 (SESSFLSKRPSTSEVNNVN) show a composition bias toward polar residues. Glycyl lysine isopeptide (Lys-Gly) (interchain with G-Cter in SUMO2) cross-links involve residues Lys189, Lys210, Lys223, Lys233, Lys275, Lys284, and Lys292. A compositionally biased stretch (polar residues) spans 195–235 (ESVSGANSSAVLPSVKSPSVTSSQAMLAKGTNTSSNQSKNG). C2H2-type zinc fingers lie at residues 321-343 (FKCF…MKHH) and 358-381 (TTCQ…ESTH). Residues 388–412 (TICKICELSFETEHVLLQHMKDNHK) form a C2H2-type 3; degenerate zinc finger. 2 C2H2-type zinc fingers span residues 418–441 (YVCQ…RTSH) and 449–469 (CPFC…YMKH). 3 disordered regions span residues 523 to 608 (GPLQ…NKKS), 739 to 809 (LKKE…SDKE), and 896 to 979 (FLRK…KERS). A compositionally biased stretch (low complexity) spans 527–541 (SGASPTPSISASAST). 2 stretches are compositionally biased toward polar residues: residues 542-584 (LQLS…NGSK) and 592-608 (SNMQ…NKKS). Ser545 carries the post-translational modification Phosphoserine. Residue Lys550 forms a Glycyl lysine isopeptide (Lys-Gly) (interchain with G-Cter in SUMO2) linkage. Basic and acidic residues predominate over residues 739-784 (LKKEAPAKEQEPVSKEIARPNMAERETETSNSESKQDKAASSKEKN). Residue Lys740 forms a Glycyl lysine isopeptide (Lys-Gly) (interchain with G-Cter in SUMO2) linkage. The span at 786 to 797 (CNANSFEGSSTT) shows a compositional bias: polar residues. Residues 798-809 (KSEESITVSDKE) are compositionally biased toward basic and acidic residues. Polar residues predominate over residues 905–914 (SVSSDVSEQG). Phosphoserine is present on residues Ser908 and Ser911. Residues 970 to 979 (VDLEDEKERS) are compositionally biased toward acidic residues. Lys976 is covalently cross-linked (Glycyl lysine isopeptide (Lys-Gly) (interchain with G-Cter in SUMO2)).

It is found in the nucleus. May function as a transcription factor. The protein is Zinc finger protein 280D (ZNF280D) of Homo sapiens (Human).